Consider the following 229-residue polypeptide: UPF0228 protein MA_3119 (229 aa).

Over residues 35-66 (STPVNTSTPVNTSTPVNTSTPVNTSTPVSTST) the composition is skewed to low complexity. The interval 35–67 (STPVNTSTPVNTSTPVNTSTPVNTSTPVSTSTI) is disordered.

This sequence belongs to the UPF0228 family.

This Methanosarcina acetivorans (strain ATCC 35395 / DSM 2834 / JCM 12185 / C2A) protein is UPF0228 protein MA_3119.